The following is a 537-amino-acid chain: CTP synthase (537 aa).

Positions 1–268 are amidoligase domain; sequence MSTKYIFVTG…DQIVCDHLKL (268 aa). S14 is a CTP binding site. S14 serves as a coordination point for UTP. 15-20 lines the ATP pocket; that stretch reads SIGKGI. Residue Y55 participates in L-glutamine binding. D72 lines the ATP pocket. 2 residues coordinate Mg(2+): D72 and E142. CTP is bound by residues 149–151, 189–194, and K225; these read DIE and KTKPTQ. UTP-binding positions include 189 to 194 and K225; that span reads KTKPTQ. The Glutamine amidotransferase type-1 domain occupies 293-536; it reads RIALVGKYVE…VTAAVEKSSD (244 aa). G355 contacts L-glutamine. The active-site Nucleophile; for glutamine hydrolysis is C382. Residues 383–386, E406, and R464 contribute to the L-glutamine site; that span reads LGMQ. Catalysis depends on residues H509 and E511.

Belongs to the CTP synthase family. Homotetramer.

The catalysed reaction is UTP + L-glutamine + ATP + H2O = CTP + L-glutamate + ADP + phosphate + 2 H(+). The enzyme catalyses L-glutamine + H2O = L-glutamate + NH4(+). It carries out the reaction UTP + NH4(+) + ATP = CTP + ADP + phosphate + 2 H(+). Its pathway is pyrimidine metabolism; CTP biosynthesis via de novo pathway; CTP from UDP: step 2/2. Allosterically activated by GTP, when glutamine is the substrate; GTP has no effect on the reaction when ammonia is the substrate. The allosteric effector GTP functions by stabilizing the protein conformation that binds the tetrahedral intermediate(s) formed during glutamine hydrolysis. Inhibited by the product CTP, via allosteric rather than competitive inhibition. Catalyzes the ATP-dependent amination of UTP to CTP with either L-glutamine or ammonia as the source of nitrogen. Regulates intracellular CTP levels through interactions with the four ribonucleotide triphosphates. This Streptococcus sanguinis (strain SK36) protein is CTP synthase.